A 407-amino-acid polypeptide reads, in one-letter code: Transcriptional regulator alnR (407 aa).

A DNA-binding region (zn(2)-C6 fungal-type) is located at residues 23-53 (SCDTCQEAKVKCSQHKPSCHRCLRHRQPCVY). Positions 53-85 (YSPQRRSGRPPKRPSPSSRLGPESNNSGDDIHN) are disordered. Polar residues predominate over residues 75–85 (ESNNSGDDIHN).

Its subcellular location is the nucleus. Its function is as follows. Transcriptional regulator involved in the positive regulation of the expression of the gene cluster that mediates the biosynthesis of asperlin, a polyketide showing anti-inflammatory, antitumor and antibiotic activities. This Emericella nidulans (strain FGSC A4 / ATCC 38163 / CBS 112.46 / NRRL 194 / M139) (Aspergillus nidulans) protein is Transcriptional regulator alnR.